A 183-amino-acid polypeptide reads, in one-letter code: Streptavidin (183 aa).

Positions 1-24 are cleaved as a signal peptide; sequence MRKIVVAAIAVSLTTVSITASASA. In terms of domain architecture, Avidin-like spans 37 to 159; that stretch reads AEAGITGTWY…GHDTFTKVKP (123 aa). Positions 67 and 78 each coordinate biotin. The Cell attachment site; atypical motif lies at 83–85; that stretch reads RYD. Biotin is bound by residues Trp116, Trp132, and Trp144.

Belongs to the avidin/streptavidin family. As to quaternary structure, homotetramer.

It localises to the secreted. Its function is as follows. The biological function of streptavidin is not known. Forms a strong non-covalent specific complex with biotin (one molecule of biotin per subunit of streptavidin). The protein is Streptavidin of Streptomyces avidinii.